Consider the following 53-residue polypeptide: uncharacterized protein (53 aa).

Residues 28 to 45 (AIVFSLAVFGIVEAYYYW) form a helical membrane-spanning segment.

The protein localises to the host membrane. This is an uncharacterized protein from Acidianus convivator (ABV).